We begin with the raw amino-acid sequence, 250 residues long: 2,3-bisphosphoglycerate-dependent phosphoglycerate mutase (250 aa).

Substrate is bound by residues 8–15 (RHGQSAWN), 21–22 (TG), Arg-60, 87–90 (ERHY), Lys-98, 114–115 (RR), and 183–184 (GN). His-9 (tele-phosphohistidine intermediate) is an active-site residue. The Proton donor/acceptor role is filled by Glu-87.

The protein belongs to the phosphoglycerate mutase family. BPG-dependent PGAM subfamily. Homodimer.

It catalyses the reaction (2R)-2-phosphoglycerate = (2R)-3-phosphoglycerate. It functions in the pathway carbohydrate degradation; glycolysis; pyruvate from D-glyceraldehyde 3-phosphate: step 3/5. Catalyzes the interconversion of 2-phosphoglycerate and 3-phosphoglycerate. The sequence is that of 2,3-bisphosphoglycerate-dependent phosphoglycerate mutase from Nitratidesulfovibrio vulgaris (strain DP4) (Desulfovibrio vulgaris).